The sequence spans 229 residues: Cytidylate kinase (229 aa).

Residue 12–20 (GPSGVGKST) participates in ATP binding.

The protein belongs to the cytidylate kinase family. Type 1 subfamily.

The protein resides in the cytoplasm. It catalyses the reaction CMP + ATP = CDP + ADP. The enzyme catalyses dCMP + ATP = dCDP + ADP. The polypeptide is Cytidylate kinase (Mesomycoplasma hyopneumoniae (strain 232) (Mycoplasma hyopneumoniae)).